We begin with the raw amino-acid sequence, 313 residues long: L-lactate dehydrogenase (313 aa).

Residues V11, D32, R37, Y62, and 76-77 each bind NAD(+); that span reads GV. Residues Q79, R85, and 117–120 contribute to the substrate site; that span reads NPVD. Residues 115 to 117 and S143 contribute to the NAD(+) site; that span reads ASN. A substrate-binding site is contributed by 148–151; sequence DTAR. 2 residues coordinate beta-D-fructose 1,6-bisphosphate: R153 and H168. Catalysis depends on H175, which acts as the Proton acceptor. The residue at position 221 (Y221) is a Phosphotyrosine. T230 is a substrate binding site.

This sequence belongs to the LDH/MDH superfamily. LDH family. As to quaternary structure, homotetramer.

It localises to the cytoplasm. The catalysed reaction is (S)-lactate + NAD(+) = pyruvate + NADH + H(+). It functions in the pathway fermentation; pyruvate fermentation to lactate; (S)-lactate from pyruvate: step 1/1. Its activity is regulated as follows. Allosterically activated by fructose 1,6-bisphosphate (FBP). Catalyzes the conversion of lactate to pyruvate. The sequence is that of L-lactate dehydrogenase from Geotalea daltonii (strain DSM 22248 / JCM 15807 / FRC-32) (Geobacter daltonii).